We begin with the raw amino-acid sequence, 488 residues long: MSDFIASKEDDYSKWYLDIVQKAKLADYSPVKGCMVIMPYGYSIWSKIQSILDKKFKETGHENAYFPMLIPYSFLEREKDHIDGFSPEFAIIKDAGGESLAEPLVLRPTSETIIWNMYSKWIKSYRDLPLKINQWANVVRWEKRTRPFLRTTEFLWQEGHTAHATEEEALEETLLILDVYKRFIEDYLAIPVFCGKKSEKEKFAGAVSTYSIEALMQDKKALQAATSHYLGLNFAKAFDVKFQDKDGKMRHVFASSWGVSTRLIGALIMVHSDEKGLVLPPRIAPIEIIVIPIFKKEDEINKKILDYSDCVVDALKKAEFRVEIDKDVRSSPGFRFSSAEFKGIPIRLEVGINDVLLNSVTISRRDKDRKFKYQISLDSLISKVKVELDLMQKDLFQRALNFRILNTKEIFRSSKDSYETFKAYVNDYSGFVLSCWCGSLNCENIIKNETKATIRCIPDDFKARDLTGMTCIYCSSKAKYFVLFAKSY.

The protein belongs to the class-II aminoacyl-tRNA synthetase family. ProS type 3 subfamily. In terms of assembly, homodimer.

The protein localises to the cytoplasm. The enzyme catalyses tRNA(Pro) + L-proline + ATP = L-prolyl-tRNA(Pro) + AMP + diphosphate. In terms of biological role, catalyzes the attachment of proline to tRNA(Pro) in a two-step reaction: proline is first activated by ATP to form Pro-AMP and then transferred to the acceptor end of tRNA(Pro). Can inadvertently accommodate and process cysteine. This Borreliella burgdorferi (strain ATCC 35210 / DSM 4680 / CIP 102532 / B31) (Borrelia burgdorferi) protein is Proline--tRNA ligase (proS).